The primary structure comprises 314 residues: 2,3-dihydroxyphenylpropionate/2,3-dihydroxicinnamic acid 1,2-dioxygenase (314 aa).

The Proton donor role is filled by H115. The Proton acceptor role is filled by H179.

The protein belongs to the LigB/MhpB extradiol dioxygenase family. In terms of assembly, homotetramer. It depends on Fe(2+) as a cofactor.

It carries out the reaction 3-(2,3-dihydroxyphenyl)propanoate + O2 = (2Z,4E)-2-hydroxy-6-oxonona-2,4-dienedioate + H(+). It catalyses the reaction (2E)-3-(2,3-dihydroxyphenyl)prop-2-enoate + O2 = (2Z,4E,7E)-2-hydroxy-6-oxonona-2,4,7-trienedioate + H(+). The protein operates within aromatic compound metabolism; 3-phenylpropanoate degradation. Functionally, catalyzes the non-heme iron(II)-dependent oxidative cleavage of 2,3-dihydroxyphenylpropionic acid and 2,3-dihydroxicinnamic acid into 2-hydroxy-6-ketononadienedioate and 2-hydroxy-6-ketononatrienedioate, respectively. This is 2,3-dihydroxyphenylpropionate/2,3-dihydroxicinnamic acid 1,2-dioxygenase from Escherichia coli (strain 55989 / EAEC).